A 271-amino-acid polypeptide reads, in one-letter code: Protein MGF 360-15R (271 aa).

This sequence belongs to the asfivirus MGF 360 family.

Plays a role in virus cell tropism, and may be required for efficient virus replication in macrophages. The sequence is that of Protein MGF 360-15R from African swine fever virus (isolate Tick/Malawi/Lil 20-1/1983) (ASFV).